Consider the following 389-residue polypeptide: Major outer membrane porin (389 aa).

Positions 1–22 (MKKLLKSALLFAATGSALSLQA) are cleaved as a signal peptide.

Belongs to the chlamydial porin (CP) (TC 1.B.2) family. Part of a disulfide cross-linked outer membrane complex (COMC) composed of the major outer membrane porin (MOMP), the small cysteine-rich protein (OmcA) and the large cysteine-rich periplasmic protein (OmcB).

It localises to the cell outer membrane. Its function is as follows. In elementary bodies (EBs, the infectious stage, which is able to survive outside the host cell) provides the structural integrity of the outer envelope through disulfide cross-links with the small cysteine-rich protein and the large cysteine-rich periplasmic protein. It has been described in publications as the Sarkosyl-insoluble COMC (Chlamydia outer membrane complex), and serves as the functional equivalent of peptidoglycan. Functionally, permits diffusion of specific solutes through the outer membrane. In Chlamydia abortus (strain DSM 27085 / S26/3) (Chlamydophila abortus), this protein is Major outer membrane porin (ompA).